The following is a 111-amino-acid chain: Ribonuclease P protein component (111 aa).

The protein belongs to the RnpA family. As to quaternary structure, consists of a catalytic RNA component (M1 or rnpB) and a protein subunit.

The catalysed reaction is Endonucleolytic cleavage of RNA, removing 5'-extranucleotides from tRNA precursor.. Functionally, RNaseP catalyzes the removal of the 5'-leader sequence from pre-tRNA to produce the mature 5'-terminus. It can also cleave other RNA substrates such as 4.5S RNA. The protein component plays an auxiliary but essential role in vivo by binding to the 5'-leader sequence and broadening the substrate specificity of the ribozyme. The chain is Ribonuclease P protein component from Fusobacterium nucleatum subsp. nucleatum (strain ATCC 25586 / DSM 15643 / BCRC 10681 / CIP 101130 / JCM 8532 / KCTC 2640 / LMG 13131 / VPI 4355).